The chain runs to 89 residues: DNA/RNA-binding protein Alba 1 (89 aa).

This sequence belongs to the histone-like Alba family.

It localises to the cytoplasm. The protein localises to the chromosome. In terms of biological role, binds double-stranded DNA tightly but without sequence specificity. Involved in DNA compaction. The polypeptide is DNA/RNA-binding protein Alba 1 (Archaeoglobus fulgidus (strain ATCC 49558 / DSM 4304 / JCM 9628 / NBRC 100126 / VC-16)).